Reading from the N-terminus, the 43-residue chain is Protein PsbN (43 aa).

A helical membrane pass occupies residues 7–27; the sequence is VAIFISCLLVSFTGYALYTAF.

Belongs to the PsbN family.

The protein resides in the plastid. Its subcellular location is the chloroplast thylakoid membrane. Its function is as follows. May play a role in photosystem I and II biogenesis. The polypeptide is Protein PsbN (Huperzia lucidula (Shining clubmoss)).